A 134-amino-acid polypeptide reads, in one-letter code: UPF0756 membrane protein YeaL (134 aa).

4 helical membrane passes run 14–34, 51–71, 86–106, and 110–130; these read ALGFISHNTTVAVSILVLIIV, LTVGIIILTIGVMAPIASGTL, LVAIAVGVFVSWLGGRGITLM, and PQLVAGLLVGTVLGVALFRGV.

This sequence belongs to the UPF0756 family.

The protein localises to the cell membrane. This is UPF0756 membrane protein YeaL from Salmonella typhimurium (strain LT2 / SGSC1412 / ATCC 700720).